We begin with the raw amino-acid sequence, 201 residues long: LIM domain-containing protein PLIM2b (201 aa).

2 LIM zinc-binding domains span residues 8 to 68 (DKCT…LFKE) and 103 to 163 (DKCA…LFME). The tract at residues 171 to 201 (KKKSESQEVLPEVVPEEQPAPPPPDENREDN) is disordered. The span at 177–187 (QEVLPEVVPEE) shows a compositional bias: low complexity.

In terms of assembly, interacts with NEK3.

The sequence is that of LIM domain-containing protein PLIM2b from Oryza sativa subsp. japonica (Rice).